The sequence spans 212 residues: Cytochrome c biogenesis ATP-binding export protein CcmA (212 aa).

Positions 8 to 212 (LQATALACER…RSIDLAKGSA (205 aa)) constitute an ABC transporter domain. 40-47 (GPNGSGKT) serves as a coordination point for ATP.

This sequence belongs to the ABC transporter superfamily. CcmA exporter (TC 3.A.1.107) family. The complex is composed of two ATP-binding proteins (CcmA) and two transmembrane proteins (CcmB).

The protein localises to the cell inner membrane. The enzyme catalyses heme b(in) + ATP + H2O = heme b(out) + ADP + phosphate + H(+). Functionally, part of the ABC transporter complex CcmAB involved in the biogenesis of c-type cytochromes; once thought to export heme, this seems not to be the case, but its exact role is uncertain. Responsible for energy coupling to the transport system. The sequence is that of Cytochrome c biogenesis ATP-binding export protein CcmA from Pseudomonas syringae pv. tomato (strain ATCC BAA-871 / DC3000).